The chain runs to 50 residues: Insulin (50 aa).

3 disulfides stabilise this stretch: Cys7–Cys36, Cys19–Cys49, and Cys35–Cys40.

Belongs to the insulin family. As to quaternary structure, heterodimer of a B chain and an A chain linked by two disulfide bonds.

It localises to the secreted. Functionally, insulin decreases blood glucose concentration. It increases cell permeability to monosaccharides, amino acids and fatty acids. It accelerates glycolysis, the pentose phosphate cycle, and glycogen synthesis in liver. The polypeptide is Insulin (INS) (Proechimys guairae (Guaira spiny rat)).